We begin with the raw amino-acid sequence, 528 residues long: MGHLHIVHWRLTMNGAIAALFLCLVMVHQQHAVRILAVFPTPAYSHHSVFKVYIEALAERGHDVVVIKSTDRINYANRNGLRGNVSEIDASLSQEYYGRLMRHAGVFRKRGIVADSSTVTAHNYMGLVRMMSDQFDLPIVKSFIEEAHKHKFDLLITEAYIDYPLVFSHLFGDLPVVQISSGYAVAENFETMGAVSRHPVYYPNLWRDKFSGLNVWKQSMKCTLSWRYRMNLVNWPDEQNALLKRQFGESTPTIQELRNRVELLFVNTHAIFDNNRPVPPSVQYLGALHLHDKRPDSMYGMVREFLDNATTGAIYVSFGSAISSEDMEPEFIEMLLRVFEKLPYSILWKYDGYMNRMPANVFVQSWFEQYNLLHHKNVRAFVTQGGVQSTDEAVEAIVPMVGMPMMGDQAYNMNKIVELGLGKVVDTVRVNAEQLIEAIVDVAESPKYRKRLRELRHMIHHQPMTPLQKAVWYTEHVIESRRRVVPTMLKTRAANVNYSDYIMSYVFVPFIMFTVMNHLRQLLKMNMV.

Positions 1–32 are cleaved as a signal peptide; the sequence is MGHLHIVHWRLTMNGAIAALFLCLVMVHQQHA.

Belongs to the UDP-glycosyltransferase family.

In terms of biological role, catalyzes the transfer of glucose from UDP-glucose to ecdysteroids which are insect molting hormones. Expression of egt interferes with normal insect development and block molting. This chain is Ecdysteroid UDP-glucosyltransferase (EGT), found in Mamestra brassicae nuclear polyhedrosis virus (MbNPV).